Consider the following 111-residue polypeptide: UPF0060 membrane protein xcc-b100_1273 (111 aa).

The next 4 helical transmembrane spans lie at 8-28 (LLLFVATAVAELVGCYLPYLW), 34-54 (SVWLLLPAALSLAVFVWLLTL), 62-82 (VYAAYGGVYIATALLWLWWVD), and 91-111 (LLGAGCCLLGMAIIMFSPRSG).

This sequence belongs to the UPF0060 family.

Its subcellular location is the cell inner membrane. The protein is UPF0060 membrane protein xcc-b100_1273 of Xanthomonas campestris pv. campestris (strain B100).